Here is a 162-residue protein sequence, read N- to C-terminus: Large ribosomal subunit protein bL17 (162 aa).

Residues 126 to 162 (KKEEVKTKSRRGGKAKKAEPTTEAPANTTEETTDSAE) are disordered. Residues 146–155 (TTEAPANTTE) show a composition bias toward low complexity.

This sequence belongs to the bacterial ribosomal protein bL17 family. In terms of assembly, part of the 50S ribosomal subunit. Contacts protein L32.

The protein is Large ribosomal subunit protein bL17 of Flavobacterium psychrophilum (strain ATCC 49511 / DSM 21280 / CIP 103535 / JIP02/86).